The following is a 62-amino-acid chain: Large ribosomal subunit protein bL28 (62 aa).

This sequence belongs to the bacterial ribosomal protein bL28 family.

The chain is Large ribosomal subunit protein bL28 from Thermobifida fusca (strain YX).